A 352-amino-acid polypeptide reads, in one-letter code: DNA-directed RNA polymerase subunit alpha (352 aa).

Positions 1–226 are alpha N-terminal domain (alpha-NTD); that stretch reads MLISQRPTLT…ELFGLARELN (226 aa). Positions 243–352 are alpha C-terminal domain (alpha-CTD); the sequence is HIASFGLPIE…EQDYAETEQL (110 aa). Positions 324-352 are disordered; sequence DASTGTWSDSGTFSDNDGGEQDYAETEQL. Residues 326–338 show a composition bias toward polar residues; it reads STGTWSDSGTFSD. The span at 340-352 shows a compositional bias: acidic residues; that stretch reads DGGEQDYAETEQL.

Belongs to the RNA polymerase alpha chain family. In terms of assembly, homodimer. The RNAP catalytic core consists of 2 alpha, 1 beta, 1 beta' and 1 omega subunit. When a sigma factor is associated with the core the holoenzyme is formed, which can initiate transcription.

The enzyme catalyses RNA(n) + a ribonucleoside 5'-triphosphate = RNA(n+1) + diphosphate. DNA-dependent RNA polymerase catalyzes the transcription of DNA into RNA using the four ribonucleoside triphosphates as substrates. In Nocardia farcinica (strain IFM 10152), this protein is DNA-directed RNA polymerase subunit alpha.